Here is a 187-residue protein sequence, read N- to C-terminus: Photosystem I assembly protein Ycf4 (187 aa).

A run of 2 helical transmembrane segments spans residues 25–47 (YWWA…SSYL) and 62–84 (FVPQ…IYLW).

The protein belongs to the Ycf4 family.

The protein resides in the plastid. It localises to the chloroplast thylakoid membrane. Functionally, seems to be required for the assembly of the photosystem I complex. This is Photosystem I assembly protein Ycf4 from Mesostigma viride (Green alga).